Reading from the N-terminus, the 388-residue chain is Formate-dependent phosphoribosylglycinamide formyltransferase (388 aa).

N(1)-(5-phospho-beta-D-ribosyl)glycinamide is bound by residues 20–21 (EL) and Glu-80. Residues Arg-112, Lys-153, 158–163 (SSGKGQ), 193–196 (EEFI), and Glu-201 contribute to the ATP site. The 190-residue stretch at 117–306 (RLAFEKLGLR…EFEIHARAIL (190 aa)) folds into the ATP-grasp domain. Mg(2+) contacts are provided by Glu-265 and Glu-277. Residues Asp-284, Lys-352, and 359–360 (RR) each bind N(1)-(5-phospho-beta-D-ribosyl)glycinamide.

The protein belongs to the PurK/PurT family. As to quaternary structure, homodimer.

The catalysed reaction is N(1)-(5-phospho-beta-D-ribosyl)glycinamide + formate + ATP = N(2)-formyl-N(1)-(5-phospho-beta-D-ribosyl)glycinamide + ADP + phosphate + H(+). It participates in purine metabolism; IMP biosynthesis via de novo pathway; N(2)-formyl-N(1)-(5-phospho-D-ribosyl)glycinamide from N(1)-(5-phospho-D-ribosyl)glycinamide (formate route): step 1/1. In terms of biological role, involved in the de novo purine biosynthesis. Catalyzes the transfer of formate to 5-phospho-ribosyl-glycinamide (GAR), producing 5-phospho-ribosyl-N-formylglycinamide (FGAR). Formate is provided by PurU via hydrolysis of 10-formyl-tetrahydrofolate. The polypeptide is Formate-dependent phosphoribosylglycinamide formyltransferase (Methanococcus maripaludis (strain DSM 14266 / JCM 13030 / NBRC 101832 / S2 / LL)).